Reading from the N-terminus, the 256-residue chain is Type III pantothenate kinase (256 aa).

Residue 6–13 participates in ATP binding; that stretch reads DVGNSHIY. Substrate contacts are provided by residues Tyr-99 and 106 to 109; that span reads GADR. Asp-108 (proton acceptor) is an active-site residue. Asp-129 contacts K(+). Thr-132 is an ATP binding site. Position 184 (Thr-184) interacts with substrate.

It belongs to the type III pantothenate kinase family. As to quaternary structure, homodimer. Requires NH4(+) as cofactor. It depends on K(+) as a cofactor.

The protein resides in the cytoplasm. It catalyses the reaction (R)-pantothenate + ATP = (R)-4'-phosphopantothenate + ADP + H(+). Its pathway is cofactor biosynthesis; coenzyme A biosynthesis; CoA from (R)-pantothenate: step 1/5. Catalyzes the phosphorylation of pantothenate (Pan), the first step in CoA biosynthesis. In Legionella pneumophila (strain Corby), this protein is Type III pantothenate kinase.